We begin with the raw amino-acid sequence, 292 residues long: G1/S-specific cyclin-D3 (292 aa).

The Cyclin N-terminal domain maps to 27–152 (VLQSLLRLEE…LVLGKLKWDL (126 aa)). The tract at residues 254 to 292 (SLREASQTSSSPAPKAPRGSSSQGPSQTSTPTDVTAIHL) is disordered. Phosphoserine occurs at positions 264 and 279. Low complexity predominate over residues 272 to 285 (GSSSQGPSQTSTPT). A Phosphothreonine modification is found at T283.

This sequence belongs to the cyclin family. Cyclin D subfamily. In terms of assembly, interacts with the CDK4 and CDK6 protein kinases to form a serine/threonine kinase holoenzyme complex. The cyclin subunit imparts substrate specificity to the complex. Interacts with ATF5. Interacts with EIF3K. Component of the ternary complex cyclin D/CDK4/CDKN1B required for nuclear translocation and modulation of CDK4-mediated kinase activity. Can form similar complexes with either CDKN1A or CDKN2A. Phosphorylation at Thr-283 by MAP kinases is required for ubiquitination and degradation by the DCX(AMBRA1) complex. In terms of processing, ubiquitinated by the DCX(AMBRA1) complex during the transition from G1 to S cell phase, leading to its degradation: ubiquitination is dependent on Thr-283 phosphorylation. The DCX(AMBRA1) complex represents the major regulator of CCND3 stability during the G1/S transition. Polyubiquitinated by the SCF(FBXL2) complex, leading to proteasomal degradation.

It localises to the nucleus. The protein localises to the cytoplasm. Functionally, regulatory component of the cyclin D3-CDK4 (DC) complex that phosphorylates and inhibits members of the retinoblastoma (RB) protein family including RB1 and regulates the cell-cycle during G(1)/S transition. Phosphorylation of RB1 allows dissociation of the transcription factor E2F from the RB/E2F complex and the subsequent transcription of E2F target genes which are responsible for the progression through the G(1) phase. Hypophosphorylates RB1 in early G(1) phase. Cyclin D-CDK4 complexes are major integrators of various mitogenenic and antimitogenic signals. Component of the ternary complex, cyclin D3/CDK4/CDKN1B, required for nuclear translocation and activity of the cyclin D-CDK4 complex. Shows transcriptional coactivator activity with ATF5 independently of CDK4. The polypeptide is G1/S-specific cyclin-D3 (Homo sapiens (Human)).